Reading from the N-terminus, the 153-residue chain is Putative ubiquitin-conjugating enzyme E2 N-like (153 aa).

The UBC core domain maps to 3–150; that stretch reads ELPHRIIKET…ARAWTRLYAM (148 aa). N6-acetyllysine is present on lysine 83.

It belongs to the ubiquitin-conjugating enzyme family. In terms of tissue distribution, expressed in epididymis (at protein level).

This is Putative ubiquitin-conjugating enzyme E2 N-like (UBE2NL) from Homo sapiens (Human).